The chain runs to 641 residues: XK-related protein 6 (641 aa).

2 disordered regions span residues 20 to 47 (LDEAVGSGGEEDGEPGGGGCGGGGDGSE) and 84 to 120 (RSAAADGGDQPLQPPAAPGAGRQPPTPSAARPEPPPP). Positions 34-46 (PGGGGCGGGGDGS) are enriched in gly residues. The span at 107–120 (PPTPSAARPEPPPP) shows a compositional bias: pro residues. 7 consecutive transmembrane segments (helical) span residues 130–150 (LWIVLALLVFFGDVGTDLWLA), 159–179 (YVYFGLTLFFVLVPSLLVQSL), 318–338 (TLPCVSSVTSLMSLAWVLASY), 372–392 (VISFALFASIFQLYFGIFVVV), 413–433 (WEEILFNMVVGIVYIFCWFNV), 442–462 (MFAYYTIVLTENAALTFLWYF), and 473–493 (AVPALCCVFISFVAGIAMMLL).

It belongs to the XK family.

The protein localises to the cell membrane. This Homo sapiens (Human) protein is XK-related protein 6.